Here is a 280-residue protein sequence, read N- to C-terminus: Protein MGF 505-3R (280 aa).

It belongs to the asfivirus MGF 505 family.

Functionally, plays a role in virus cell tropism, and may be required for efficient virus replication in macrophages. The polypeptide is Protein MGF 505-3R (Ornithodoros (relapsing fever ticks)).